Consider the following 877-residue polypeptide: ABC transporter A family member 1 (877 aa).

A run of 7 helical transmembrane segments spans residues 46–66 (YFST…LFLI), 268–288 (VWGG…LLYK), 324–344 (ILIS…FFLG), 347–367 (FFVL…VAFF), 379–399 (IGIG…FSGM), 420–440 (IILF…IGNV), and 479–499 (LLAL…IIPG). In terms of domain architecture, ABC transporter spans 552 to 788 (LIICGLSKSY…YGEGYSVNIV (237 aa)). 591-598 (GSNGCGKS) contributes to the ATP binding site.

The protein belongs to the ABC transporter superfamily. ABCA family.

Its subcellular location is the membrane. This is ABC transporter A family member 1 (abcA1) from Dictyostelium discoideum (Social amoeba).